The primary structure comprises 609 residues: Zinc metalloproteinase/disintegrin-like HR1a (609 aa).

Positions 1 to 20 are cleaved as a signal peptide; it reads MIQVLLVTICLAVFPYQGSS. Positions 21 to 190 are excised as a propeptide; sequence IILGSGNVND…KKASKLVVTA (170 aa). A Peptidase M12B domain is found at 200 to 396; that stretch reads RFIELVIVAD…DEPQCILNEP (197 aa). Ca(2+)-binding residues include Glu203 and Asp287. Asn298 carries an N-linked (GlcNAc...) asparagine glycan. Cystine bridges form between Cys311/Cys391, Cys351/Cys375, and Cys353/Cys358. Zn(2+) is bound at residue His336. Residue Glu337 is part of the active site. Positions 340 and 346 each coordinate Zn(2+). N-linked (GlcNAc...) asparagine glycosylation is present at Asn350. N-linked (GlcNAc...) asparagine glycosylation is present at Asn374. Ca(2+) contacts are provided by Cys391 and Asn394. The propeptide occupies 397 to 400; sequence LRTD. Residues 404-490 form the Disintegrin domain; the sequence is PPVCGNELLE…DCPTDRFHRN (87 aa). Residues Val406, Asn409, Leu411, Glu413, Glu416, and Asp419 each coordinate Ca(2+). 22 disulfide bridges follow: Cys407/Cys426, Cys407/Cys436, Cys418/Cys431, Cys418/Cys436, Cys420/Cys426, Cys430/Cys453, Cys444/Cys450, Cys449/Cys475, Cys462/Cys482, Cys469/Cys494, Cys469/Cys501, Cys494/Cys506, Cys501/Cys506, Cys513/Cys528, Cys513/Cys563, Cys528/Cys571, Cys541/Cys551, Cys551/Cys558, Cys558/Cys597, Cys563/Cys571, Cys591/Cys602, and Cys597/Cys602. The D/ECD-tripeptide signature appears at 468–470; that stretch reads ECD. Ca(2+) is bound by residues Asp470, Glu473, and Asp485. Asn520 carries an N-linked (GlcNAc...) asparagine glycan.

Belongs to the venom metalloproteinase (M12B) family. P-III subfamily. P-IIIb sub-subfamily. In terms of assembly, monomer. Zn(2+) serves as cofactor. As to expression, expressed by the venom gland.

It localises to the secreted. Zinc protease that induces hemorrhage and has proteolytic activity. Has preference for Ala, His, Pro, Met, and Tyr at the P1 position, in descending order (in vitro). Predominantly prefers Val and Asp at the P3 and P2 positions, respectively. In terms of biological role, inhibits platelet aggregation induced by ADP, thrombin, platelet-activating factor and collagen. Acts by inhibiting fibrinogen interaction with platelet receptors alpha-IIb/beta-3 (ITGA2B/ITGB3). The polypeptide is Zinc metalloproteinase/disintegrin-like HR1a (Protobothrops flavoviridis (Habu)).